Here is a 428-residue protein sequence, read N- to C-terminus: Flotillin-2a (428 aa).

S-palmitoyl cysteine attachment occurs at residues Cys4, Cys19, and Cys20.

This sequence belongs to the band 7/mec-2 family. Flotillin subfamily. Heterooligomer; Heterooligomerizes with ic complex of flotillins 1 and 2. In terms of processing, palmitoylation may be required for the formation of higher order complexes and for neurite outgrowth in cultured neural stem cells.

The protein resides in the membrane. It is found in the endosome. Its function is as follows. May play a role in axon growth and regeneration. May be involved in epidermal cell adhesion and epidermal structure and function. The chain is Flotillin-2a (flot2a) from Danio rerio (Zebrafish).